Reading from the N-terminus, the 120-residue chain is Large ribosomal subunit protein uL18 (120 aa).

Belongs to the universal ribosomal protein uL18 family. Part of the 50S ribosomal subunit; part of the 5S rRNA/L5/L18/L25 subcomplex. Contacts the 5S and 23S rRNAs.

Functionally, this is one of the proteins that bind and probably mediate the attachment of the 5S RNA into the large ribosomal subunit, where it forms part of the central protuberance. This is Large ribosomal subunit protein uL18 from Chloroherpeton thalassium (strain ATCC 35110 / GB-78).